The primary structure comprises 101 residues: Large ribosomal subunit protein uL24 (101 aa).

It belongs to the universal ribosomal protein uL24 family. As to quaternary structure, part of the 50S ribosomal subunit.

Functionally, one of two assembly initiator proteins, it binds directly to the 5'-end of the 23S rRNA, where it nucleates assembly of the 50S subunit. One of the proteins that surrounds the polypeptide exit tunnel on the outside of the subunit. In Streptococcus pyogenes serotype M1, this protein is Large ribosomal subunit protein uL24.